The primary structure comprises 229 residues: Large ribosomal subunit protein uL1 (229 aa).

This sequence belongs to the universal ribosomal protein uL1 family. As to quaternary structure, part of the 50S ribosomal subunit.

In terms of biological role, binds directly to 23S rRNA. The L1 stalk is quite mobile in the ribosome, and is involved in E site tRNA release. Protein L1 is also a translational repressor protein, it controls the translation of the L11 operon by binding to its mRNA. This Streptococcus pyogenes serotype M3 (strain SSI-1) protein is Large ribosomal subunit protein uL1.